The primary structure comprises 526 residues: Glutamate--tRNA ligase, mitochondrial (526 aa).

Residues Met-1–Phe-38 constitute a mitochondrion transit peptide. Arg-37–Ala-39 lines the L-glutamate pocket. A 'HIGH' region motif is present at residues Pro-42 to Ser-50. Residue His-47 participates in ATP binding. Residues Glu-73, Tyr-222–Asn-226, and Arg-240 each bind L-glutamate. ATP is bound by residues Glu-243 and Lys-278 to Arg-282. A 'KMSKS' region motif is present at residues Lys-278–Arg-282.

The protein belongs to the class-I aminoacyl-tRNA synthetase family. Glutamate--tRNA ligase type 1 subfamily.

Its subcellular location is the mitochondrion. The catalysed reaction is tRNA(Glu) + L-glutamate + ATP = L-glutamyl-tRNA(Glu) + AMP + diphosphate. Functionally, catalyzes the attachment of glutamate to tRNA(Glu) in a two-step reaction: glutamate is first activated by ATP to form Glu-AMP and then transferred to the acceptor end of tRNA(Glu). In Schizosaccharomyces pombe (strain 972 / ATCC 24843) (Fission yeast), this protein is Glutamate--tRNA ligase, mitochondrial (mse1).